The following is a 336-amino-acid chain: Phenylalanine--tRNA ligase alpha subunit (336 aa).

Glutamate 259 is a binding site for Mg(2+).

It belongs to the class-II aminoacyl-tRNA synthetase family. Phe-tRNA synthetase alpha subunit type 1 subfamily. Tetramer of two alpha and two beta subunits. It depends on Mg(2+) as a cofactor.

Its subcellular location is the cytoplasm. The enzyme catalyses tRNA(Phe) + L-phenylalanine + ATP = L-phenylalanyl-tRNA(Phe) + AMP + diphosphate + H(+). The protein is Phenylalanine--tRNA ligase alpha subunit of Tropheryma whipplei (strain TW08/27) (Whipple's bacillus).